We begin with the raw amino-acid sequence, 545 residues long: Cytochrome P450 monooxygenase 212 (545 aa).

A signal peptide spans 1 to 14 (MAAYAWLYCALALG). Residue cysteine 486 participates in heme binding.

It belongs to the cytochrome P450 family. The cofactor is heme.

It functions in the pathway secondary metabolite biosynthesis. Cytochrome P450 monooxygenase that is able to use anthracene and pyrene as substrates for oxidation. The polypeptide is Cytochrome P450 monooxygenase 212 (Postia placenta (strain ATCC 44394 / Madison 698-R) (Brown rot fungus)).